A 238-amino-acid chain; its full sequence is Ribonuclease PH (238 aa).

Phosphate contacts are provided by residues Arg86 and 124–126; that span reads GTR.

This sequence belongs to the RNase PH family. As to quaternary structure, homohexameric ring arranged as a trimer of dimers.

The enzyme catalyses tRNA(n+1) + phosphate = tRNA(n) + a ribonucleoside 5'-diphosphate. Functionally, phosphorolytic 3'-5' exoribonuclease that plays an important role in tRNA 3'-end maturation. Removes nucleotide residues following the 3'-CCA terminus of tRNAs; can also add nucleotides to the ends of RNA molecules by using nucleoside diphosphates as substrates, but this may not be physiologically important. Probably plays a role in initiation of 16S rRNA degradation (leading to ribosome degradation) during starvation. In Rhizobium rhizogenes (strain K84 / ATCC BAA-868) (Agrobacterium radiobacter), this protein is Ribonuclease PH.